The following is a 482-amino-acid chain: Catalase easC (482 aa).

Histidine 58 is a catalytic residue. A heme-binding site is contributed by tyrosine 347.

The protein belongs to the catalase family. Heme is required as a cofactor.

The protein operates within alkaloid biosynthesis; ergot alkaloid biosynthesis. In terms of biological role, catalase; part of the gene cluster that mediates the biosynthesis of fungal ergot alkaloid. DmaW catalyzes the first step of ergot alkaloid biosynthesis by condensing dimethylallyl diphosphate (DMAP) and tryptophan to form 4-dimethylallyl-L-tryptophan. The second step is catalyzed by the methyltransferase easF that methylates 4-dimethylallyl-L-tryptophan in the presence of S-adenosyl-L-methionine, resulting in the formation of 4-dimethylallyl-L-abrine. The catalase easC and the FAD-dependent oxidoreductase easE then transform 4-dimethylallyl-L-abrine to chanoclavine-I which is further oxidized by easD in the presence of NAD(+), resulting in the formation of chanoclavine-I aldehyde. Chanoclavine-I aldehyde is the precursor of ergoamides and ergopeptines in Clavicipitaceae, and clavine-type alcaloids such as fumiclavine in Trichocomaceae. However, the metabolites downstream of chanoclavine-I aldehyde in Arthrodermataceae have not been identified yet. The chain is Catalase easC from Arthroderma otae (strain ATCC MYA-4605 / CBS 113480) (Microsporum canis).